The following is an 874-amino-acid chain: Cellulose synthase catalytic subunit [UDP-forming] (874 aa).

The next 4 membrane-spanning stretches (helical) occupy residues 30-50 (SPFSAALGCLWTILAWIVFPL), 151-171 (ILGVIVTFSLILALICITQPF), 173-193 (PLSQFIFLLLLWGVALLVRRM), and 230-250 (LVCGLILLFAETYAWIVLVLG). The segment at 271–364 (QWPTVDIFVP…FVAIFDCDHV (94 aa)) is catalytic subdomain A. Aspartate 313 is a catalytic residue. Residues aspartate 360 and aspartate 362 each contribute to the substrate site. The interval 441 to 501 (KPLDEIGGIA…GQRIRWARGM (61 aa)) is catalytic subdomain B. Aspartate 457 is a catalytic residue. Transmembrane regions (helical) follow at residues 525–545 (LNAMFHFLSGIPRLIFLTAPL), 547–567 (FLLLHAYIIYAPALMIALFVI), 592–612 (IYETVLAWYIAPPTLVALINP), 634–654 (VISRPYIFLVLLNLLGVAAGV), and 668–688 (VIVSLVWVFYNLVILGGAVAV). One can recognise a PilZ domain in the interval 694–790 (QVRRAHRVEI…QHIDFVQCTF (97 aa)). A helical membrane pass occupies residues 833–853 (SVKVIFRSLTALIAWIVSFIP).

It belongs to the glycosyltransferase 2 family. Mg(2+) serves as cofactor.

The protein localises to the cell inner membrane. The catalysed reaction is [(1-&gt;4)-beta-D-glucosyl](n) + UDP-alpha-D-glucose = [(1-&gt;4)-beta-D-glucosyl](n+1) + UDP + H(+). The protein operates within glycan metabolism; bacterial cellulose biosynthesis. Activated by bis-(3'-5') cyclic diguanylic acid (c-di-GMP). Catalytic subunit of cellulose synthase. It polymerizes uridine 5'-diphosphate glucose to cellulose, which is produced as an extracellular component for mechanical and chemical protection at the onset of the stationary phase, when the cells exhibit multicellular behavior (rdar morphotype). Coexpression of cellulose and thin aggregative fimbriae leads to a hydrophobic network with tightly packed cells embedded in a highly inert matrix. This is Cellulose synthase catalytic subunit [UDP-forming] (bcsA) from Salmonella typhimurium (strain LT2 / SGSC1412 / ATCC 700720).